Reading from the N-terminus, the 598-residue chain is MPETHQNTLTWKGTRLPAGEACNGCRERKRRCVRRKRELPCLSCQAENRPCDVSRYRRRRRRRRGPNKRNCKSLRVLGGQSAEPFNMHQQPDTDSCSEIQHGIETDECGSQCRIPSQSPGPYPEPQPAASTYSLCLPSYVTGVPKHLALVTLNALREKGAFTLPPAEIQTYLISSYIMHVHPDMPFLDLERLLEAVILRCRGRQTSMLLLQAVMFAGSIFLDPVYLHLMGYTSRRAAMRDLFGRAKLLYECGFEVQPTYKLQSLLLFTLFHEDDLAGSSFWMGEAWNLAKTIGLQYDLQEVPVDESSSELAFRRRLWWCVYTRDRLLALSTRSAMHISDGDYNVPMLALADFKSCFGTAEAYRALQLDSDLRTDGTKTALALTFIYKTKLSQLIGRVLMSQYTIGSASPTTMLYYPRPTPISLSDFLGMENDLDVWETSLPSLLEFPLPLLSPVSQAEKIIYAQRAMLHMIYLTCINALHRPWSSSAQPTSSDPWEGAFRDLSAWKIEYASQAILMIATHLHSIGLTNFLADTAVPSLLSAMITHIVRLNSDILVAPEANAVCFVQGWECLQGLREKYEWARHAAAFIRFTTRSLRTG.

The segment at residues 22–51 (CNGCRERKRRCVRRKRELPCLSCQAENRPC) is a DNA-binding region (zn(2)-C6 fungal-type).

The protein localises to the nucleus. Its function is as follows. Transcription factor; part of the gene cluster that mediates the biosynthesis of the fungal neurotoxin cyclopiazonic acid (CPA), a nanomolar inhibitor of Ca(2+)-ATPase with a unique pentacyclic indole tetramic acid scaffold. The chain is Transcription factor cpaR from Aspergillus oryzae (Yellow koji mold).